The chain runs to 1059 residues: Cellulose synthase catalytic subunit A [UDP-forming] (1059 aa).

2 disordered regions span residues methionine 1–threonine 159 and methionine 174–alanine 220. Positions asparagine 15 to glycine 36 are enriched in low complexity. Polar residues-rich tracts occupy residues glycine 40 to leucine 57 and asparagine 142 to glycine 154. The span at glutamine 181–glutamine 194 shows a compositional bias: low complexity. The span at glutamine 204–valine 219 shows a compositional bias: basic residues. Transmembrane regions (helical) follow at residues phenylalanine 246 to phenylalanine 266, isoleucine 280 to alanine 300, and phenylalanine 306 to alanine 323. The catalytic subdomain A stretch occupies residues lysine 328–glutamine 628. Aspartate 370 is a catalytic residue. The substrate site is built by aspartate 624 and aspartate 626. The catalytic subdomain B stretch occupies residues glutamine 701–alanine 761. Aspartate 717 is a catalytic residue. Transmembrane regions (helical) follow at residues isoleucine 790–isoleucine 810 and valine 813–valine 833. The disordered stretch occupies residues aspartate 933 to lysine 953. Residues serine 939–lysine 953 show a composition bias toward basic and acidic residues. The next 3 helical transmembrane spans lie at leucine 963 to leucine 983, tryptophan 993 to isoleucine 1013, and isoleucine 1035 to isoleucine 1055.

Belongs to the glycosyltransferase 2 family. It depends on Mg(2+) as a cofactor.

The protein localises to the membrane. The enzyme catalyses [(1-&gt;4)-beta-D-glucosyl](n) + UDP-alpha-D-glucose = [(1-&gt;4)-beta-D-glucosyl](n+1) + UDP + H(+). Its pathway is glycan metabolism; amoeba cellulose biosynthesis. Catalytic subunit of cellulose synthase. It incorporates glucose from uridine 5'-diphosphate glucose (UDP-alpha-D-glucose) to cellulose (a (1-&gt;4)-beta-D-glucan), which is produced as an extracellular component for mechanical and chemical protection at the onset of the stalk formation, when the cells exhibit multicellular behavior during culmination. The sequence is that of Cellulose synthase catalytic subunit A [UDP-forming] (dcsA) from Dictyostelium discoideum (Social amoeba).